A 25-amino-acid chain; its full sequence is Germin-like protein (25 aa).

Belongs to the germin family. As to quaternary structure, oligomer (believed to be a pentamer but probably hexamer). In terms of processing, the three different mass spectrometry results appear to arise from different glycosylation variants.

Its subcellular location is the secreted. It localises to the extracellular space. The protein localises to the apoplast. May play a role in plant defense. Probably has no oxalate oxidase activity even if the active site is conserved. This chain is Germin-like protein, found in Citrus sinensis (Sweet orange).